The chain runs to 150 residues: Transcriptional repressor NrdR (150 aa).

A zinc finger spans residues 3-34 (CPYCQFEDTRVIDSRLASEGEQVRRRRECNRC). An ATP-cone domain is found at 49-139 (PRIVKRDGTR…VYRSFEDVSA (91 aa)).

This sequence belongs to the NrdR family. Zn(2+) serves as cofactor.

Its function is as follows. Negatively regulates transcription of bacterial ribonucleotide reductase nrd genes and operons by binding to NrdR-boxes. This is Transcriptional repressor NrdR from Alkalilimnicola ehrlichii (strain ATCC BAA-1101 / DSM 17681 / MLHE-1).